Reading from the N-terminus, the 275-residue chain is Dermonecrotic toxin SpeSicTox-betaIIA1 (275 aa).

Histidine 5 is an active-site residue. Residues glutamate 25 and aspartate 27 each coordinate Mg(2+). Histidine 41 acts as the Nucleophile in catalysis. 2 cysteine pairs are disulfide-bonded: cysteine 45–cysteine 51 and cysteine 47–cysteine 190. A Mg(2+)-binding site is contributed by aspartate 85.

Belongs to the arthropod phospholipase D family. Class II subfamily. It depends on Mg(2+) as a cofactor. As to expression, expressed by the venom gland.

The protein resides in the secreted. It carries out the reaction an N-(acyl)-sphingosylphosphocholine = an N-(acyl)-sphingosyl-1,3-cyclic phosphate + choline. The enzyme catalyses an N-(acyl)-sphingosylphosphoethanolamine = an N-(acyl)-sphingosyl-1,3-cyclic phosphate + ethanolamine. It catalyses the reaction a 1-acyl-sn-glycero-3-phosphocholine = a 1-acyl-sn-glycero-2,3-cyclic phosphate + choline. The catalysed reaction is a 1-acyl-sn-glycero-3-phosphoethanolamine = a 1-acyl-sn-glycero-2,3-cyclic phosphate + ethanolamine. Dermonecrotic toxins cleave the phosphodiester linkage between the phosphate and headgroup of certain phospholipids (sphingolipid and lysolipid substrates), forming an alcohol (often choline) and a cyclic phosphate. This toxin acts on sphingomyelin (SM). It may also act on ceramide phosphoethanolamine (CPE), lysophosphatidylcholine (LPC) and lysophosphatidylethanolamine (LPE), but not on lysophosphatidylserine (LPS), and lysophosphatidylglycerol (LPG). It acts by transphosphatidylation, releasing exclusively cyclic phosphate products as second products. Induces dermonecrosis, hemolysis, increased vascular permeability, edema, inflammatory response, and platelet aggregation. The polypeptide is Dermonecrotic toxin SpeSicTox-betaIIA1 (Sicarius peruensis (Six-eyed sand spider)).